We begin with the raw amino-acid sequence, 350 residues long: Mitogen-activated protein kinase HOG1 (350 aa).

The region spanning 20–299 (YTDLQPVGMG…AAQALAHEYL (280 aa)) is the Protein kinase domain. Residues 26-34 (VGMGAFGLV) and Lys49 each bind ATP. Residue Asp141 is the Proton acceptor of the active site. Residues 171–173 (TGY) carry the TXY motif.

It belongs to the protein kinase superfamily. Ser/Thr protein kinase family. MAP kinase subfamily. HOG1 sub-subfamily. Requires Mg(2+) as cofactor.

It localises to the cytoplasm. Its subcellular location is the nucleus. It carries out the reaction L-seryl-[protein] + ATP = O-phospho-L-seryl-[protein] + ADP + H(+). The enzyme catalyses L-threonyl-[protein] + ATP = O-phospho-L-threonyl-[protein] + ADP + H(+). Proline-directed serine/threonine-protein kinase involved in a signal transduction pathway that is activated by changes in the osmolarity of the extracellular environment. Controls osmotic regulation of transcription of target genes. Involved in environmental stress response. Via the downstream MSN2 transcription factor, may play roles in the regulation of growth, conidiation, trap development, fatty acid metabolism and secondary metabolites biosynthesis. This Arthrobotrys oligospora (strain ATCC 24927 / CBS 115.81 / DSM 1491) (Nematode-trapping fungus) protein is Mitogen-activated protein kinase HOG1.